A 98-amino-acid chain; its full sequence is Small ribosomal subunit protein uS17 (98 aa).

The segment at 1-21 (MADQKGPKYTPAAEKPRGRRK) is disordered. Lys96 is covalently cross-linked (Isoglutamyl lysine isopeptide (Lys-Gln) (interchain with Q-Cter in protein Pup)).

It belongs to the universal ribosomal protein uS17 family. As to quaternary structure, part of the 30S ribosomal subunit.

In terms of biological role, one of the primary rRNA binding proteins, it binds specifically to the 5'-end of 16S ribosomal RNA. In Mycolicibacterium smegmatis (strain ATCC 700084 / mc(2)155) (Mycobacterium smegmatis), this protein is Small ribosomal subunit protein uS17 (rpsQ).